We begin with the raw amino-acid sequence, 232 residues long: Cytochrome c oxidase subunit 2 (232 aa).

Over 1 to 30 the chain is Mitochondrial intermembrane; sequence MNNFFQDFNLLFSSSLFSSYMDWFYNFNCS. A helical membrane pass occupies residues 31-52; sequence LLFGVLSFVSTMFVYLLLSSFY. At 53–69 the chain is on the mitochondrial matrix side; the sequence is FKSKKIEYQFGELLCSV. A helical transmembrane segment spans residues 70-89; it reads FPTLILVMQMVPSLSLLYYY. The Mitochondrial intermembrane portion of the chain corresponds to 90 to 232; that stretch reads GLMNLDSSLT…KSWCVGLLSD (143 aa). 6 residues coordinate Cu cation: His164, Cys199, Glu201, Cys203, His207, and Met210. Glu201 serves as a coordination point for Mg(2+).

The protein belongs to the cytochrome c oxidase subunit 2 family. As to quaternary structure, component of the cytochrome c oxidase (complex IV, CIV), a multisubunit enzyme composed of a catalytic core of 3 subunits and several supernumerary subunits. The complex exists as a monomer or a dimer and forms supercomplexes (SCs) in the inner mitochondrial membrane with ubiquinol-cytochrome c oxidoreductase (cytochrome b-c1 complex, complex III, CIII). Requires Cu cation as cofactor.

It localises to the mitochondrion inner membrane. The enzyme catalyses 4 Fe(II)-[cytochrome c] + O2 + 8 H(+)(in) = 4 Fe(III)-[cytochrome c] + 2 H2O + 4 H(+)(out). In terms of biological role, component of the cytochrome c oxidase, the last enzyme in the mitochondrial electron transport chain which drives oxidative phosphorylation. The respiratory chain contains 3 multisubunit complexes succinate dehydrogenase (complex II, CII), ubiquinol-cytochrome c oxidoreductase (cytochrome b-c1 complex, complex III, CIII) and cytochrome c oxidase (complex IV, CIV), that cooperate to transfer electrons derived from NADH and succinate to molecular oxygen, creating an electrochemical gradient over the inner membrane that drives transmembrane transport and the ATP synthase. Cytochrome c oxidase is the component of the respiratory chain that catalyzes the reduction of oxygen to water. Electrons originating from reduced cytochrome c in the intermembrane space (IMS) are transferred via the dinuclear copper A center (CU(A)) of subunit 2 and heme A of subunit 1 to the active site in subunit 1, a binuclear center (BNC) formed by heme A3 and copper B (CU(B)). The BNC reduces molecular oxygen to 2 water molecules using 4 electrons from cytochrome c in the IMS and 4 protons from the mitochondrial matrix. The chain is Cytochrome c oxidase subunit 2 (COII) from Ascaris suum (Pig roundworm).